Consider the following 183-residue polypeptide: Large ribosomal subunit protein mL43 (183 aa).

2 disordered regions span residues 120 to 144 (HTDN…TGCG) and 162 to 183 (PGAL…AQAE). The span at 122–139 (DNPSIQGQWTPSPTNGLP) shows a compositional bias: polar residues. A compositionally biased stretch (basic and acidic residues) spans 162–172 (PGALDRERDRI).

The protein belongs to the mitochondrion-specific ribosomal protein mL43 family. Component of the mitochondrial ribosome large subunit (39S) which comprises a 16S rRNA and about 50 distinct proteins. As to expression, ubiquitous with the highest levels in the liver, heart and kidneys. The skeletal muscle, brain and testis showed lower but detectable expression. Expression is coregulated with TWNK.

It localises to the mitochondrion. This Mus musculus (Mouse) protein is Large ribosomal subunit protein mL43 (Mrpl43).